Here is a 79-residue protein sequence, read N- to C-terminus: Methionine-rich peptide X (79 aa).

The first 22 residues, 1–22 (MKKLAAVMLTSCLMVAVGASFA), serve as a signal peptide directing secretion. Residues 37 to 79 (KKDDMAKDEMKKDSMAKDGMKKDAMKKDAMMKKDGMTKDEMKK) form a disordered region.

Post-translationally, protein is oxidized (possibly on Met residues) when cells are exposed to chlorite or hypochlorite; initially the protein is highly oxidized, by 50 minutes all protein is in the reduced form.

The protein localises to the periplasm. Serves as an oxidative stress sink, specifically for chlorite and hypochlorite. This is Methionine-rich peptide X from Azospira oryzae (strain ATCC BAA-33 / DSM 13638 / PS) (Dechlorosoma suillum).